Here is a 456-residue protein sequence, read N- to C-terminus: Tyrosine phenol-lyase (456 aa).

The residue at position 257 (lysine 257) is an N6-(pyridoxal phosphate)lysine.

This sequence belongs to the beta-eliminating lyase family. As to quaternary structure, homotetramer. Pyridoxal 5'-phosphate serves as cofactor.

The catalysed reaction is L-tyrosine + H2O = phenol + pyruvate + NH4(+). The sequence is that of Tyrosine phenol-lyase (tpl) from Citrobacter freundii.